Reading from the N-terminus, the 175-residue chain is Sec-independent protein translocase protein TatB (175 aa).

Residues 1 to 21 (MLDLGLSKMALIGVVALVVLG) form a helical membrane-spanning segment. The segment covering 96–115 (VSPGGSAAADAPDGPSAASG) has biased composition (low complexity). 2 disordered regions span residues 96–119 (VSPGGSAAADAPDGPSAASGEPSW) and 152–175 (QVQSGAARVARHRPASLRRPARFL). Positions 160 to 175 (VARHRPASLRRPARFL) are enriched in basic residues.

Belongs to the TatB family. As to quaternary structure, the Tat system comprises two distinct complexes: a TatABC complex, containing multiple copies of TatA, TatB and TatC subunits, and a separate TatA complex, containing only TatA subunits. Substrates initially bind to the TatABC complex, which probably triggers association of the separate TatA complex to form the active translocon.

Its subcellular location is the cell inner membrane. Its function is as follows. Part of the twin-arginine translocation (Tat) system that transports large folded proteins containing a characteristic twin-arginine motif in their signal peptide across membranes. Together with TatC, TatB is part of a receptor directly interacting with Tat signal peptides. TatB may form an oligomeric binding site that transiently accommodates folded Tat precursor proteins before their translocation. In Burkholderia pseudomallei (strain 1710b), this protein is Sec-independent protein translocase protein TatB.